Consider the following 311-residue polypeptide: GTP cyclohydrolase FolE2 (311 aa).

This sequence belongs to the GTP cyclohydrolase IV family.

The enzyme catalyses GTP + H2O = 7,8-dihydroneopterin 3'-triphosphate + formate + H(+). The protein operates within cofactor biosynthesis; 7,8-dihydroneopterin triphosphate biosynthesis; 7,8-dihydroneopterin triphosphate from GTP: step 1/1. Functionally, converts GTP to 7,8-dihydroneopterin triphosphate. The chain is GTP cyclohydrolase FolE2 from Xanthomonas campestris pv. campestris (strain 8004).